We begin with the raw amino-acid sequence, 243 residues long: Venom nerve growth factor (243 aa).

The first 18 residues, 1–18 (MSMLCYTLIIVFLIGIWA), serve as a signal peptide directing secretion. A propeptide spanning residues 19-125 (APKSEDNVPL…TLNRNIRAKR (107 aa)) is cleaved from the precursor. The segment covering 47-66 (GLKTSRNTDQRHPAPKKAED) has biased composition (basic and acidic residues). The segment at 47 to 69 (GLKTSRNTDQRHPAPKKAEDQEL) is disordered. Disulfide bonds link C139/C204, C182/C232, and C192/C234. N-linked (GlcNAc...) asparagine glycosylation occurs at N148.

The protein belongs to the NGF-beta family. Homodimer; non-covalently linked. In terms of tissue distribution, expressed by the venom gland.

The protein resides in the secreted. In terms of biological role, nerve growth factor is important for the development and maintenance of the sympathetic and sensory nervous systems. It stimulates division and differentiation of sympathetic and embryonic sensory neurons as well as basal forebrain cholinergic neurons in the brain. Its relevance in the snake venom is not clear. However, it has been shown to inhibit metalloproteinase-dependent proteolysis of platelet glycoprotein Ib alpha, suggesting a metalloproteinase inhibition to prevent metalloprotease autodigestion and/or protection against prey proteases. Binds a lipid between the two protein chains in the homodimer. The lipid-bound form promotes histamine relase from mouse mast cells, contrary to the lipid-free form. The chain is Venom nerve growth factor from Oxyuranus scutellatus scutellatus (Australian taipan).